Reading from the N-terminus, the 515-residue chain is Tyrosine decarboxylase 1 (515 aa).

Tandem repeats lie at residues aspartate 81–glutamate 138 and valine 141–glutamine 192. The segment at aspartate 81 to glutamine 192 is 2 X approximate tandem repeats. Alanine 105 is a substrate binding site. Pyridoxal 5'-phosphate contacts are provided by threonine 169 and cysteine 170. Histidine 205 is a binding site for substrate. Positions 264 and 318 each coordinate pyridoxal 5'-phosphate. Lysine 321 carries the N6-(pyridoxal phosphate)lysine modification.

The protein belongs to the group II decarboxylase family. It depends on pyridoxal 5'-phosphate as a cofactor. Mostly expressed in bulbs, and, to a lower extent, in stems, roots, leaves and flowers.

It catalyses the reaction L-tyrosine + H(+) = tyramine + CO2. Its pathway is alkaloid biosynthesis. Catalyzes the decarboxylation of L-tyrosine to tyramine, which is converted to norbelladine, a precursor to all Amaryllidaceae alkaloids such as galanthamine, lycorine and haemanthamine, and including haemanthamine- and crinamine-type alkaloids, promising anticancer agents. The polypeptide is Tyrosine decarboxylase 1 (Narcissus pseudonarcissus (Daffodil)).